The chain runs to 906 residues: Valine--tRNA ligase (906 aa).

A 'HIGH' region motif is present at residues 43-53 (PNVTGSLHIGH). A 'KMSKS' region motif is present at residues 548–552 (KMSKS). Lysine 551 provides a ligand contact to ATP. A coiled-coil region spans residues 842-905 (EKARLTKDIA…EAALSRLASV (64 aa)).

The protein belongs to the class-I aminoacyl-tRNA synthetase family. ValS type 1 subfamily. In terms of assembly, monomer.

The protein localises to the cytoplasm. It catalyses the reaction tRNA(Val) + L-valine + ATP = L-valyl-tRNA(Val) + AMP + diphosphate. In terms of biological role, catalyzes the attachment of valine to tRNA(Val). As ValRS can inadvertently accommodate and process structurally similar amino acids such as threonine, to avoid such errors, it has a 'posttransfer' editing activity that hydrolyzes mischarged Thr-tRNA(Val) in a tRNA-dependent manner. The protein is Valine--tRNA ligase of Caulobacter vibrioides (strain ATCC 19089 / CIP 103742 / CB 15) (Caulobacter crescentus).